Consider the following 240-residue polypeptide: Methylthioribulose-1-phosphate dehydratase (240 aa).

C99 lines the substrate pocket. The Zn(2+) site is built by H116 and H118. E145 (proton donor/acceptor) is an active-site residue. H201 serves as a coordination point for Zn(2+).

Belongs to the aldolase class II family. MtnB subfamily. Requires Zn(2+) as cofactor.

It localises to the cytoplasm. The enzyme catalyses 5-(methylsulfanyl)-D-ribulose 1-phosphate = 5-methylsulfanyl-2,3-dioxopentyl phosphate + H2O. It participates in amino-acid biosynthesis; L-methionine biosynthesis via salvage pathway; L-methionine from S-methyl-5-thio-alpha-D-ribose 1-phosphate: step 2/6. Its function is as follows. Catalyzes the dehydration of methylthioribulose-1-phosphate (MTRu-1-P) into 2,3-diketo-5-methylthiopentyl-1-phosphate (DK-MTP-1-P). The chain is Methylthioribulose-1-phosphate dehydratase from Ajellomyces capsulatus (strain G186AR / H82 / ATCC MYA-2454 / RMSCC 2432) (Darling's disease fungus).